We begin with the raw amino-acid sequence, 133 residues long: Probable non-specific lipid-transfer protein 2 (133 aa).

A signal peptide spans 1–31 (MRTVSMAALVVIAAALAWTSSAELASAPAPG). 4 disulfide bridges follow: C35–C83, C45–C60, C61–C106, and C81–C121.

Belongs to the plant LTP family.

Plant non-specific lipid-transfer proteins transfer phospholipids as well as galactolipids across membranes. May play a role in wax or cutin deposition in the cell walls of expanding epidermal cells and certain secretory tissues. This chain is Probable non-specific lipid-transfer protein 2, found in Parietaria judaica (Pellitory-of-the-wall).